Consider the following 309-residue polypeptide: Protein FdhE (309 aa).

This sequence belongs to the FdhE family.

Its subcellular location is the cytoplasm. Its function is as follows. Necessary for formate dehydrogenase activity. The chain is Protein FdhE from Escherichia coli O9:H4 (strain HS).